A 322-amino-acid polypeptide reads, in one-letter code: Ig gamma-2A chain C region (322 aa).

Ig-like domains are found at residues 6–98 (PSVY…KKIV), 115–212 (VFIF…KSIS), and 221–317 (PQVY…KSLS). 3 disulfides stabilise this stretch: C27-C82, C136-C196, and C242-C300. An N-linked (GlcNAc...) asparagine glycan is attached at N172.

The chain is Ig gamma-2A chain C region (Igg-2a) from Rattus norvegicus (Rat).